We begin with the raw amino-acid sequence, 68 residues long: MGMRMMFIMFMLVVLATTVDTFTSDRALDAMNAAASNKASRLIALAVRGCCARAACAGIHQELCGGRR.

The signal sequence occupies residues 1–21 (MGMRMMFIMFMLVVLATTVDT). A propeptide spanning residues 22–48 (FTSDRALDAMNAAASNKASRLIALAVR) is cleaved from the precursor. 2 disulfide bridges follow: C50–C56 and C51–C64. Residues 52 to 54 (ARA) form a lacks the Ser-Xaa-Pro motif that is crucial for potent interaction with nAChR region. G65 carries the glycine amide modification.

The protein belongs to the conotoxin A superfamily. As to expression, expressed by the venom duct.

It is found in the secreted. Functionally, alpha-conotoxins act on postsynaptic membranes, they bind to the nicotinic acetylcholine receptors (nAChR) and thus inhibit them. Has a distinct nAChR binding mode from other alpha-conotoxins, due to a different three residue motif (Ala-Xaa-Ala instead of the conserved Ser-Xaa-Pro motif). In Conus litteratus (Lettered cone), this protein is Alpha-conotoxin-like Lt1.2.